Here is a 1091-residue protein sequence, read N- to C-terminus: ATP-dependent helicase/deoxyribonuclease subunit B (1091 aa).

Belongs to the helicase family. AddB/RexB type 2 subfamily. As to quaternary structure, heterodimer of AddA and RexB. Mg(2+) serves as cofactor.

In terms of biological role, the heterodimer acts as both an ATP-dependent DNA helicase and an ATP-dependent, dual-direction single-stranded exonuclease. Recognizes the chi site generating a DNA molecule suitable for the initiation of homologous recombination. This subunit has 5' -&gt; 3' nuclease activity but not helicase activity. The chain is ATP-dependent helicase/deoxyribonuclease subunit B from Streptococcus pneumoniae (strain CGSP14).